We begin with the raw amino-acid sequence, 279 residues long: Protein SCO2 homolog, mitochondrial (279 aa).

Residues 73 to 90 (LVVTLLFGGGIIGTWWYV) form a helical membrane-spanning segment. Residues 91–279 (HQEKEKRIQM…MKTFVRLFPD (189 aa)) lie on the Mitochondrial intermembrane side of the membrane. Positions 97 to 271 (RIQMQRLEQL…IAESIRNHMK (175 aa)) constitute a Thioredoxin domain. Cu cation is bound by residues cysteine 145, cysteine 149, and histidine 236. Cysteine 145 and cysteine 149 are joined by a disulfide.

The protein belongs to the SCO1/2 family. Homodimer.

It is found in the mitochondrion inner membrane. Functionally, copper metallochaperone essential for the synthesis and maturation of cytochrome c oxidase subunit II (MT-CO2/COX2) by facilitating the incorporation of copper into the Cu(A) site of MT-CO2/COX2. Could also act as a thiol-disulfide oxidoreductase to regulate the redox state of the cysteines in SCO1 during maturation of MT-CO2/COX2. The chain is Protein SCO2 homolog, mitochondrial (sco2) from Danio rerio (Zebrafish).